We begin with the raw amino-acid sequence, 242 residues long: ATP synthase subunit b (242 aa).

A run of 2 helical transmembrane segments spans residues 8–28 (VLPFLLVLLFAFAPLALASAP) and 87–107 (LMDLFWRVLNFAVLMAILIKF).

This sequence belongs to the ATPase B chain family. In terms of assembly, F-type ATPases have 2 components, F(1) - the catalytic core - and F(0) - the membrane proton channel. F(1) has five subunits: alpha(3), beta(3), gamma(1), delta(1), epsilon(1). F(0) has three main subunits: a(1), b(2) and c(10-14). The alpha and beta chains form an alternating ring which encloses part of the gamma chain. F(1) is attached to F(0) by a central stalk formed by the gamma and epsilon chains, while a peripheral stalk is formed by the delta and b chains.

The protein resides in the cell inner membrane. F(1)F(0) ATP synthase produces ATP from ADP in the presence of a proton or sodium gradient. F-type ATPases consist of two structural domains, F(1) containing the extramembraneous catalytic core and F(0) containing the membrane proton channel, linked together by a central stalk and a peripheral stalk. During catalysis, ATP synthesis in the catalytic domain of F(1) is coupled via a rotary mechanism of the central stalk subunits to proton translocation. Its function is as follows. Component of the F(0) channel, it forms part of the peripheral stalk, linking F(1) to F(0). This chain is ATP synthase subunit b, found in Desulfotalea psychrophila (strain LSv54 / DSM 12343).